We begin with the raw amino-acid sequence, 420 residues long: Ribulose bisphosphate carboxylase (420 aa).

The Proton acceptor role is filled by Lys-155. Lys-157 provides a ligand contact to substrate. Lys-181, Asp-183, and Glu-184 together coordinate Mg(2+). Lys-181 is modified (N6-carboxylysine). Catalysis depends on His-273, which acts as the Proton acceptor. Substrate-binding positions include Arg-274, His-306, 343–345 (SGG), and 365–368 (QAGG).

This sequence belongs to the RuBisCO large chain family. Type III subfamily. In terms of assembly, homodimer or homodecamer. In contrast to form I RuBisCO, the form III RuBisCO is composed solely of large subunits. It depends on Mg(2+) as a cofactor.

It catalyses the reaction 2 (2R)-3-phosphoglycerate + 2 H(+) = D-ribulose 1,5-bisphosphate + CO2 + H2O. The catalysed reaction is D-ribulose 1,5-bisphosphate + O2 = 2-phosphoglycolate + (2R)-3-phosphoglycerate + 2 H(+). Functionally, catalyzes the addition of molecular CO(2) and H(2)O to ribulose 1,5-bisphosphate (RuBP), generating two molecules of 3-phosphoglycerate (3-PGA). Functions in an archaeal AMP degradation pathway, together with AMP phosphorylase and R15P isomerase. This chain is Ribulose bisphosphate carboxylase, found in Pyrococcus furiosus (strain ATCC 43587 / DSM 3638 / JCM 8422 / Vc1).